The following is a 204-amino-acid chain: Isochorismatase domain-containing protein 2 (204 aa).

Belongs to the isochorismatase family. As to quaternary structure, interacts with CDKN2A.

The protein localises to the cytoplasm. It is found in the nucleus. This is Isochorismatase domain-containing protein 2 (ISOC2) from Bos taurus (Bovine).